Reading from the N-terminus, the 120-residue chain is Large ribosomal subunit protein uL24 (120 aa).

Belongs to the universal ribosomal protein uL24 family. In terms of assembly, part of the 50S ribosomal subunit.

In terms of biological role, one of two assembly initiator proteins, it binds directly to the 5'-end of the 23S rRNA, where it nucleates assembly of the 50S subunit. Located at the polypeptide exit tunnel on the outside of the subunit. This Methanocaldococcus jannaschii (strain ATCC 43067 / DSM 2661 / JAL-1 / JCM 10045 / NBRC 100440) (Methanococcus jannaschii) protein is Large ribosomal subunit protein uL24.